We begin with the raw amino-acid sequence, 210 residues long: Orotate phosphoribosyltransferase (210 aa).

Residues Arg-97, Lys-98, and 125–133 (NDMVSSGKS) each bind 5-phospho-alpha-D-ribose 1-diphosphate. Residues Ser-129 and Arg-157 each coordinate orotate.

This sequence belongs to the purine/pyrimidine phosphoribosyltransferase family. PyrE subfamily. In terms of assembly, homodimer. Requires Mg(2+) as cofactor.

It catalyses the reaction orotidine 5'-phosphate + diphosphate = orotate + 5-phospho-alpha-D-ribose 1-diphosphate. The protein operates within pyrimidine metabolism; UMP biosynthesis via de novo pathway; UMP from orotate: step 1/2. Functionally, catalyzes the transfer of a ribosyl phosphate group from 5-phosphoribose 1-diphosphate to orotate, leading to the formation of orotidine monophosphate (OMP). This chain is Orotate phosphoribosyltransferase, found in Chlamydia pneumoniae (Chlamydophila pneumoniae).